A 351-amino-acid chain; its full sequence is 3-dehydroquinate synthase (351 aa).

NAD(+) contacts are provided by residues 126 to 127 (TT), Lys-138, and Lys-147. Zn(2+)-binding residues include Glu-180, His-244, and His-260.

The protein belongs to the sugar phosphate cyclases superfamily. Dehydroquinate synthase family. Co(2+) is required as a cofactor. Zn(2+) serves as cofactor. It depends on NAD(+) as a cofactor.

Its subcellular location is the cytoplasm. The catalysed reaction is 7-phospho-2-dehydro-3-deoxy-D-arabino-heptonate = 3-dehydroquinate + phosphate. The protein operates within metabolic intermediate biosynthesis; chorismate biosynthesis; chorismate from D-erythrose 4-phosphate and phosphoenolpyruvate: step 2/7. Catalyzes the conversion of 3-deoxy-D-arabino-heptulosonate 7-phosphate (DAHP) to dehydroquinate (DHQ). This chain is 3-dehydroquinate synthase, found in Exiguobacterium sp. (strain ATCC BAA-1283 / AT1b).